We begin with the raw amino-acid sequence, 555 residues long: MKFRSDKVKKGIERAPHRALLRACGLSDEDFDKPLIGIANSYIDIIPGHVHLREFVEPIKEEVRKLGGVPIEFNVIGVDDGIAMGHEGMHYSLPSRELIADSIETVVNAHQLDALICIPNCDKIVPGMLMGALRVNVPTVFISGGPMLAGEVNGQKVDLISVFEGIGKVKRGEISEQELKVIEASACPTCGSCSGMFTANSMNCLTEVLGLALPGNGTILAIDPRREILARNAVKALFELLEKDVKPRDIVTEEALDDAFTVDIAMGGSSNTILHLLAIAREAGIEYNLAKINEISKRTPTICKISPASHYHIEDLDRVGGIPTIMKELSKLGLLHTERKTVSGKTIGEIISDAPDADGEVVRTIENPYSKDGGIAILFGNLAPEGAVVKTAGVDPKMLTFKGKAICFDSEEEAIEGILGGKVKPGHVVVIRYEGPKGGPGMREMLSPTSAIMGMGLGDKVALITDGRFSGGTRGACVGHISPEAAAGGPIGIVKDGDEILIDIPNRRIELLISEEEFNERMKNFKPKQKEIKSSWLRRYAKLVTSASKGAILEA.

A Mg(2+)-binding site is contributed by D80. C121 lines the [2Fe-2S] cluster pocket. Residues D122 and K123 each coordinate Mg(2+). Position 123 is an N6-carboxylysine (K123). C193 provides a ligand contact to [2Fe-2S] cluster. Position 444 (E444) interacts with Mg(2+). The Proton acceptor role is filled by S470.

The protein belongs to the IlvD/Edd family. In terms of assembly, homodimer. [2Fe-2S] cluster serves as cofactor. It depends on Mg(2+) as a cofactor.

The enzyme catalyses (2R)-2,3-dihydroxy-3-methylbutanoate = 3-methyl-2-oxobutanoate + H2O. The catalysed reaction is (2R,3R)-2,3-dihydroxy-3-methylpentanoate = (S)-3-methyl-2-oxopentanoate + H2O. It functions in the pathway amino-acid biosynthesis; L-isoleucine biosynthesis; L-isoleucine from 2-oxobutanoate: step 3/4. Its pathway is amino-acid biosynthesis; L-valine biosynthesis; L-valine from pyruvate: step 3/4. Its function is as follows. Functions in the biosynthesis of branched-chain amino acids. Catalyzes the dehydration of (2R,3R)-2,3-dihydroxy-3-methylpentanoate (2,3-dihydroxy-3-methylvalerate) into 2-oxo-3-methylpentanoate (2-oxo-3-methylvalerate) and of (2R)-2,3-dihydroxy-3-methylbutanoate (2,3-dihydroxyisovalerate) into 2-oxo-3-methylbutanoate (2-oxoisovalerate), the penultimate precursor to L-isoleucine and L-valine, respectively. The chain is Dihydroxy-acid dehydratase from Aquifex aeolicus (strain VF5).